We begin with the raw amino-acid sequence, 87 residues long: Cell division topological specificity factor (87 aa).

It belongs to the MinE family.

Its function is as follows. Prevents the cell division inhibition by proteins MinC and MinD at internal division sites while permitting inhibition at polar sites. This ensures cell division at the proper site by restricting the formation of a division septum at the midpoint of the long axis of the cell. This Aliivibrio fischeri (strain ATCC 700601 / ES114) (Vibrio fischeri) protein is Cell division topological specificity factor.